We begin with the raw amino-acid sequence, 257 residues long: Phosphonates import ATP-binding protein PhnC (257 aa).

One can recognise an ABC transporter domain in the interval 4–248 (IEFKNVSKVY…IFSEIYGRTI (245 aa)). An ATP-binding site is contributed by 37–44 (GLSGAGKS).

This sequence belongs to the ABC transporter superfamily. Phosphonates importer (TC 3.A.1.9.1) family. In terms of assembly, the complex is composed of two ATP-binding proteins (PhnC), two transmembrane proteins (PhnE) and a solute-binding protein (PhnD).

Its subcellular location is the cell membrane. The catalysed reaction is phosphonate(out) + ATP + H2O = phosphonate(in) + ADP + phosphate + H(+). Functionally, part of the ABC transporter complex PhnCDE involved in phosphonates import. Responsible for energy coupling to the transport system. This chain is Phosphonates import ATP-binding protein PhnC, found in Staphylococcus aureus (strain bovine RF122 / ET3-1).